A 1407-amino-acid polypeptide reads, in one-letter code: ABC transporter B family member 6 (1407 aa).

The segment at 18–65 is disordered; it reads LTPVSEVSEPPESPSPYLDPGAEHGGTGTAAQADDEEEMEEPEEMEPP. Positions 50–63 are enriched in acidic residues; sequence ADDEEEMEEPEEME. 4 consecutive transmembrane segments (helical) span residues 84–104, 139–159, 212–231, and 236–258; these read VLMV…IVYL, IVYI…CWIL, VGNY…IGFV, and IALI…NIFL. Residues 86 to 379 enclose the ABC transmembrane type-1 1 domain; that stretch reads MVFGSVAAAA…AATNFYSFDQ (294 aa). N-linked (GlcNAc...) asparagine glycosylation occurs at Asn-291. 2 helical membrane passes run 310–330 and 351–371; these read GILI…LAIC and GEII…NQAA. An ABC transporter 1 domain is found at 412–647; the sequence is IEFRNVYFSY…GNLYAELLKC (236 aa). 447-454 provides a ligand contact to ATP; that stretch reads GRNGSGKS. 2 N-linked (GlcNAc...) asparagine glycosylation sites follow: Asn-449 and Asn-663. Disordered regions lie at residues 670–696 and 709–815; these read AERD…SLQR and NSEE…DGQH. Asn-727 carries an N-linked (GlcNAc...) asparagine glycan. Positions 733-755 are enriched in basic and acidic residues; that stretch reads VGEKEPTIKRQDSFEMRLPELPK. The segment covering 761-770 has biased composition (polar residues); that stretch reads PQRQKSNGSD. Residue Asn-767 is glycosylated (N-linked (GlcNAc...) asparagine). The ABC transmembrane type-1 2 domain maps to 835 to 1123; the sequence is AVLGSIGAAI…PFGLAPYILK (289 aa). A run of 6 helical transmembrane segments spans residues 840 to 860, 880 to 900, 958 to 978, 982 to 1002, 1061 to 1081, and 1102 to 1122; these read IGAA…ALVV, LIIA…HFYF, IFIQ…LLGW, LVAL…KLWL, IGFA…LLLW, and MVFS…PYIL. Positions 1158–1395 constitute an ABC transporter 2 domain; it reads IELKNIDFCY…NGLYVRLMQP (238 aa). Asn-1178 is a glycosylation site (N-linked (GlcNAc...) asparagine). Residue 1193–1200 coordinates ATP; the sequence is GVSGSGKS. Residues Asn-1260 and Asn-1346 are each glycosylated (N-linked (GlcNAc...) asparagine).

This sequence belongs to the ABC transporter superfamily. ABCB family. Multidrug resistance exporter (TC 3.A.1.201) subfamily. As to expression, expressed in aerial tissues.

The protein resides in the membrane. The enzyme catalyses (indol-3-yl)acetate(in) + ATP + H2O = (indol-3-yl)acetate(out) + ADP + phosphate + H(+). Functionally, probable auxin efflux transporter that contributes, together with ABCB20 and in a FKBP42/TWD1-dependent manner, to the regulation of leaf position and morphology, internode distribution, roots development, and inflorescence organization, probably by modulating auxin repartition. The chain is ABC transporter B family member 6 from Arabidopsis thaliana (Mouse-ear cress).